Reading from the N-terminus, the 283-residue chain is Bifunctional protein FolD (283 aa).

NADP(+) contacts are provided by residues 165-167 (GRS), serine 190, and valine 231.

It belongs to the tetrahydrofolate dehydrogenase/cyclohydrolase family. As to quaternary structure, homodimer.

It catalyses the reaction (6R)-5,10-methylene-5,6,7,8-tetrahydrofolate + NADP(+) = (6R)-5,10-methenyltetrahydrofolate + NADPH. The catalysed reaction is (6R)-5,10-methenyltetrahydrofolate + H2O = (6R)-10-formyltetrahydrofolate + H(+). Its pathway is one-carbon metabolism; tetrahydrofolate interconversion. In terms of biological role, catalyzes the oxidation of 5,10-methylenetetrahydrofolate to 5,10-methenyltetrahydrofolate and then the hydrolysis of 5,10-methenyltetrahydrofolate to 10-formyltetrahydrofolate. The chain is Bifunctional protein FolD from Anoxybacillus flavithermus (strain DSM 21510 / WK1).